Reading from the N-terminus, the 116-residue chain is Transmembrane protein 213 (116 aa).

An N-terminal signal peptide occupies residues 1–35 (MAQSGVFLRNPGHLTSAPQAALLFSLVLTSFHLSC). Residues 36-79 (GTETSSSNSTLSAHHPDPGTLEQCANVDFCPLASLCCRASVDEY) lie on the Extracellular side of the membrane. A helical membrane pass occupies residues 80–100 (GWIAAAVGWSFWFLTLILLCV). At 101–116 (DKLMKLTPEEPKDLAA) the chain is on the cytoplasmic side.

The protein localises to the membrane. The chain is Transmembrane protein 213 (Tmem213) from Mus musculus (Mouse).